A 553-amino-acid chain; its full sequence is Probable cytochrome P450 301a1, mitochondrial (553 aa).

Position 502 (Cys-502) interacts with heme.

Belongs to the cytochrome P450 family. The cofactor is heme.

Its subcellular location is the mitochondrion membrane. The sequence is that of Probable cytochrome P450 301a1, mitochondrial (Cyp301a1) from Drosophila melanogaster (Fruit fly).